A 261-amino-acid polypeptide reads, in one-letter code: tRNA threonylcarbamoyladenosine dehydratase (261 aa).

The chain crosses the membrane as a helical span at residues 230–250 (CANGFGAATMITATFGFFAVS).

Belongs to the HesA/MoeB/ThiF family.

The protein resides in the membrane. Catalyzes the ATP-dependent dehydration of threonylcarbamoyladenosine at position 37 (t(6)A37) to form cyclic t(6)A37 (ct(6)A37) in tRNAs that read codons beginning with adenine. This Haemophilus influenzae (strain ATCC 51907 / DSM 11121 / KW20 / Rd) protein is tRNA threonylcarbamoyladenosine dehydratase (tcdA).